The primary structure comprises 136 residues: Transcription antitermination protein NusB (136 aa).

It belongs to the NusB family.

In terms of biological role, involved in transcription antitermination. Required for transcription of ribosomal RNA (rRNA) genes. Binds specifically to the boxA antiterminator sequence of the ribosomal RNA (rrn) operons. This chain is Transcription antitermination protein NusB, found in Salinispora arenicola (strain CNS-205).